The primary structure comprises 466 residues: Uronate isomerase (466 aa).

Belongs to the metallo-dependent hydrolases superfamily. Uronate isomerase family.

It catalyses the reaction D-glucuronate = D-fructuronate. The catalysed reaction is aldehydo-D-galacturonate = keto-D-tagaturonate. It participates in carbohydrate metabolism; pentose and glucuronate interconversion. The chain is Uronate isomerase from Rhizorhabdus wittichii (strain DSM 6014 / CCUG 31198 / JCM 15750 / NBRC 105917 / EY 4224 / RW1) (Sphingomonas wittichii).